Reading from the N-terminus, the 122-residue chain is Large ribosomal subunit protein bL19 (122 aa).

Belongs to the bacterial ribosomal protein bL19 family.

Its function is as follows. This protein is located at the 30S-50S ribosomal subunit interface and may play a role in the structure and function of the aminoacyl-tRNA binding site. The sequence is that of Large ribosomal subunit protein bL19 (rplS) from Synechocystis sp. (strain ATCC 27184 / PCC 6803 / Kazusa).